The chain runs to 294 residues: 4-hydroxy-tetrahydrodipicolinate synthase (294 aa).

A pyruvate-binding site is contributed by threonine 48. The Proton donor/acceptor role is filled by tyrosine 136. The active-site Schiff-base intermediate with substrate is the lysine 164. Position 206 (valine 206) interacts with pyruvate.

The protein belongs to the DapA family. Homotetramer; dimer of dimers.

It is found in the cytoplasm. The catalysed reaction is L-aspartate 4-semialdehyde + pyruvate = (2S,4S)-4-hydroxy-2,3,4,5-tetrahydrodipicolinate + H2O + H(+). It functions in the pathway amino-acid biosynthesis; L-lysine biosynthesis via DAP pathway; (S)-tetrahydrodipicolinate from L-aspartate: step 3/4. In terms of biological role, catalyzes the condensation of (S)-aspartate-beta-semialdehyde [(S)-ASA] and pyruvate to 4-hydroxy-tetrahydrodipicolinate (HTPA). In Desulforudis audaxviator (strain MP104C), this protein is 4-hydroxy-tetrahydrodipicolinate synthase.